The primary structure comprises 305 residues: Serine/threonine-protein phosphatase ppe1 (305 aa).

Mn(2+) is bound by residues Asp-51, His-53, Asp-79, and Asn-111. The Proton donor role is filled by His-112. Residues His-161 and His-235 each coordinate Mn(2+).

This sequence belongs to the PPP phosphatase family. PP-6 (PP-V) subfamily. As to quaternary structure, interacts with sts5, ekc1 and mis12. Mn(2+) serves as cofactor.

It is found in the nucleus. It carries out the reaction O-phospho-L-seryl-[protein] + H2O = L-seryl-[protein] + phosphate. The enzyme catalyses O-phospho-L-threonyl-[protein] + H2O = L-threonyl-[protein] + phosphate. Its function is as follows. Has a role in chromosome segregation. May provide a dynamic connection between kinetochore microtubules and kinetochore chromatin. Negatively regulates mis12. This Schizosaccharomyces pombe (strain 972 / ATCC 24843) (Fission yeast) protein is Serine/threonine-protein phosphatase ppe1 (ppe1).